A 269-amino-acid polypeptide reads, in one-letter code: uncharacterized protein (269 aa).

This is an uncharacterized protein from Acanthamoeba polyphaga mimivirus (APMV).